Here is a 422-residue protein sequence, read N- to C-terminus: Transcription termination factor Rho 1 (422 aa).

Residues alanine 49 to aspartate 124 enclose the Rho RNA-BD domain. Residues glycine 173–alanine 178, arginine 185–isoleucine 190, and arginine 216 contribute to the ATP site.

The protein belongs to the Rho family. As to quaternary structure, homohexamer. The homohexamer assembles into an open ring structure.

Facilitates transcription termination by a mechanism that involves Rho binding to the nascent RNA, activation of Rho's RNA-dependent ATPase activity, and release of the mRNA from the DNA template. The polypeptide is Transcription termination factor Rho 1 (Ehrlichia chaffeensis (strain ATCC CRL-10679 / Arkansas)).